Consider the following 223-residue polypeptide: Deoxyribose-phosphate aldolase (223 aa).

Residue aspartate 89 is the Proton donor/acceptor of the active site. The active-site Schiff-base intermediate with acetaldehyde is the lysine 152. Residue lysine 181 is the Proton donor/acceptor of the active site.

This sequence belongs to the DeoC/FbaB aldolase family. DeoC type 1 subfamily.

It localises to the cytoplasm. The enzyme catalyses 2-deoxy-D-ribose 5-phosphate = D-glyceraldehyde 3-phosphate + acetaldehyde. Its pathway is carbohydrate degradation; 2-deoxy-D-ribose 1-phosphate degradation; D-glyceraldehyde 3-phosphate and acetaldehyde from 2-deoxy-alpha-D-ribose 1-phosphate: step 2/2. Functionally, catalyzes a reversible aldol reaction between acetaldehyde and D-glyceraldehyde 3-phosphate to generate 2-deoxy-D-ribose 5-phosphate. This is Deoxyribose-phosphate aldolase from Bacillus cereus (strain B4264).